Here is a 443-residue protein sequence, read N- to C-terminus: Cobyrinate a,c-diamide synthase (443 aa).

The 186-residue stretch at 248 to 433 folds into the GATase cobBQ-type domain; the sequence is KIAVAYDKAF…LHNHAVANPY (186 aa). The active-site Nucleophile is the Cys-327.

The protein belongs to the CobB/CbiA family. Mg(2+) is required as a cofactor.

It catalyses the reaction cob(II)yrinate + 2 L-glutamine + 2 ATP + 2 H2O = cob(II)yrinate a,c diamide + 2 L-glutamate + 2 ADP + 2 phosphate + 2 H(+). It carries out the reaction Ni-sirohydrochlorin + 2 L-glutamine + 2 ATP + 2 H2O = Ni-sirohydrochlorin a,c-diamide + 2 L-glutamate + 2 ADP + 2 phosphate + 2 H(+). The protein operates within cofactor biosynthesis; adenosylcobalamin biosynthesis; cob(II)yrinate a,c-diamide from sirohydrochlorin (anaerobic route): step 10/10. Catalyzes the ATP-dependent amidation of the two carboxylate groups at positions a and c of cobyrinate, using either L-glutamine or ammonia as the nitrogen source. Involved in the biosynthesis of the unique nickel-containing tetrapyrrole coenzyme F430, the prosthetic group of methyl-coenzyme M reductase (MCR), which plays a key role in methanogenesis and anaerobic methane oxidation. Catalyzes the ATP-dependent amidation of the two carboxylate groups at positions a and c of Ni-sirohydrochlorin, using L-glutamine or ammonia as the nitrogen source. This chain is Cobyrinate a,c-diamide synthase, found in Methanocaldococcus jannaschii (strain ATCC 43067 / DSM 2661 / JAL-1 / JCM 10045 / NBRC 100440) (Methanococcus jannaschii).